Here is a 397-residue protein sequence, read N- to C-terminus: Enoyl-[acyl-carrier-protein] reductase [NADH] (397 aa).

NAD(+) contacts are provided by residues 48–53 (GASTGY), 74–75 (LE), 111–112 (DA), and 139–140 (LA). Tyr225 provides a ligand contact to substrate. Tyr235 acts as the Proton donor in catalysis. Residues Lys244 and 273–275 (VVT) each bind NAD(+).

The protein belongs to the TER reductase family. In terms of assembly, monomer.

The catalysed reaction is a 2,3-saturated acyl-[ACP] + NAD(+) = a (2E)-enoyl-[ACP] + NADH + H(+). The protein operates within lipid metabolism; fatty acid biosynthesis. Involved in the final reduction of the elongation cycle of fatty acid synthesis (FAS II). Catalyzes the reduction of a carbon-carbon double bond in an enoyl moiety that is covalently linked to an acyl carrier protein (ACP). This is Enoyl-[acyl-carrier-protein] reductase [NADH] from Tolumonas auensis (strain DSM 9187 / NBRC 110442 / TA 4).